Reading from the N-terminus, the 297-residue chain is Tyrosine recombinase XerD (297 aa).

The Core-binding (CB) domain maps to 1 to 86 (MNDLIEDFLH…SLRSFFHYLM (86 aa)). The 185-residue stretch at 107 to 291 (GLPKVLNLDD…TKLRLKDVYK (185 aa)) folds into the Tyr recombinase domain. Active-site residues include arginine 147, lysine 171, histidine 243, arginine 246, and histidine 269. Tyrosine 278 acts as the O-(3'-phospho-DNA)-tyrosine intermediate in catalysis.

This sequence belongs to the 'phage' integrase family. XerD subfamily. Forms a cyclic heterotetrameric complex composed of two molecules of XerC and two molecules of XerD.

It localises to the cytoplasm. Functionally, site-specific tyrosine recombinase, which acts by catalyzing the cutting and rejoining of the recombining DNA molecules. The XerC-XerD complex is essential to convert dimers of the bacterial chromosome into monomers to permit their segregation at cell division. It also contributes to the segregational stability of plasmids. The chain is Tyrosine recombinase XerD from Listeria monocytogenes serovar 1/2a (strain ATCC BAA-679 / EGD-e).